The following is a 371-amino-acid chain: Dual-specificity RNA methyltransferase RlmN (371 aa).

The active-site Proton acceptor is Glu99. The 228-residue stretch at Asp106 to Asp333 folds into the Radical SAM core domain. Cys113 and Cys338 are disulfide-bonded. [4Fe-4S] cluster contacts are provided by Cys120, Cys124, and Cys127. S-adenosyl-L-methionine is bound by residues Gly165–Glu166, Ser197, Ser219–Asn221, and Asn295. The S-methylcysteine intermediate role is filled by Cys338. Residues Leu345 to Leu371 are disordered. The segment covering Glu353–Gln365 has biased composition (basic and acidic residues).

This sequence belongs to the radical SAM superfamily. RlmN family. [4Fe-4S] cluster serves as cofactor.

The protein localises to the cytoplasm. The enzyme catalyses adenosine(2503) in 23S rRNA + 2 reduced [2Fe-2S]-[ferredoxin] + 2 S-adenosyl-L-methionine = 2-methyladenosine(2503) in 23S rRNA + 5'-deoxyadenosine + L-methionine + 2 oxidized [2Fe-2S]-[ferredoxin] + S-adenosyl-L-homocysteine. It catalyses the reaction adenosine(37) in tRNA + 2 reduced [2Fe-2S]-[ferredoxin] + 2 S-adenosyl-L-methionine = 2-methyladenosine(37) in tRNA + 5'-deoxyadenosine + L-methionine + 2 oxidized [2Fe-2S]-[ferredoxin] + S-adenosyl-L-homocysteine. Specifically methylates position 2 of adenine 2503 in 23S rRNA and position 2 of adenine 37 in tRNAs. m2A2503 modification seems to play a crucial role in the proofreading step occurring at the peptidyl transferase center and thus would serve to optimize ribosomal fidelity. This chain is Dual-specificity RNA methyltransferase RlmN, found in Syntrophotalea carbinolica (strain DSM 2380 / NBRC 103641 / GraBd1) (Pelobacter carbinolicus).